Consider the following 306-residue polypeptide: Oxygen-dependent coproporphyrinogen-III oxidase (306 aa).

Ser99 contacts substrate. A divalent metal cation-binding residues include His103 and His113. The Proton donor role is filled by His113. Asn115–Arg117 is a binding site for substrate. 2 residues coordinate a divalent metal cation: His152 and His182. The tract at residues Tyr247–Arg282 is important for dimerization. Position 265–267 (Gly265–Arg267) interacts with substrate.

The protein belongs to the aerobic coproporphyrinogen-III oxidase family. In terms of assembly, homodimer. The cofactor is a divalent metal cation.

Its subcellular location is the cytoplasm. The enzyme catalyses coproporphyrinogen III + O2 + 2 H(+) = protoporphyrinogen IX + 2 CO2 + 2 H2O. It participates in porphyrin-containing compound metabolism; protoporphyrin-IX biosynthesis; protoporphyrinogen-IX from coproporphyrinogen-III (O2 route): step 1/1. Its function is as follows. Involved in the heme biosynthesis. Catalyzes the aerobic oxidative decarboxylation of propionate groups of rings A and B of coproporphyrinogen-III to yield the vinyl groups in protoporphyrinogen-IX. The polypeptide is Oxygen-dependent coproporphyrinogen-III oxidase (Burkholderia ambifaria (strain MC40-6)).